A 108-amino-acid chain; its full sequence is Nucleoid-associated protein Csal_1459 (108 aa).

Residues 84–93 (EETSRGRMEE) show a composition bias toward basic and acidic residues. Residues 84–108 (EETSRGRMEEATEGMNLPPGFKMPF) are disordered.

This sequence belongs to the YbaB/EbfC family. As to quaternary structure, homodimer.

Its subcellular location is the cytoplasm. It is found in the nucleoid. Binds to DNA and alters its conformation. May be involved in regulation of gene expression, nucleoid organization and DNA protection. The polypeptide is Nucleoid-associated protein Csal_1459 (Chromohalobacter salexigens (strain ATCC BAA-138 / DSM 3043 / CIP 106854 / NCIMB 13768 / 1H11)).